Here is a 594-residue protein sequence, read N- to C-terminus: Jacalin-related lectin 44 (594 aa).

A disordered region spans residues M1–G23. 4 Jacalin-type lectin domains span residues I2–S148, P151–T293, P296–P441, and V448–P588. A compositionally biased stretch (basic and acidic residues) spans I10–G23.

This sequence belongs to the jacalin lectin family.

In Arabidopsis thaliana (Mouse-ear cress), this protein is Jacalin-related lectin 44 (JAL44).